A 325-amino-acid polypeptide reads, in one-letter code: L-lactate dehydrogenase (325 aa).

Residues V21, D42, K47, Y73, and 87–88 each bind NAD(+); that span reads GA. Substrate is bound by residues Q90, R96, and 128 to 131; that span reads NPVD. NAD(+)-binding positions include 126-128 and S151; that span reads ATN. 156-159 serves as a coordination point for substrate; the sequence is DTAR. Beta-D-fructose 1,6-bisphosphate-binding residues include R161 and H176. H183 acts as the Proton acceptor in catalysis. Y228 is modified (phosphotyrosine). A substrate-binding site is contributed by T237.

The protein belongs to the LDH/MDH superfamily. LDH family. In terms of assembly, homotetramer.

The protein localises to the cytoplasm. The enzyme catalyses (S)-lactate + NAD(+) = pyruvate + NADH + H(+). It participates in fermentation; pyruvate fermentation to lactate; (S)-lactate from pyruvate: step 1/1. Allosterically activated by fructose 1,6-bisphosphate (FBP). Functionally, catalyzes the conversion of lactate to pyruvate. In Shouchella clausii (strain KSM-K16) (Alkalihalobacillus clausii), this protein is L-lactate dehydrogenase.